We begin with the raw amino-acid sequence, 735 residues long: Ribosomal protein S6 kinase alpha-1 (735 aa).

The residue at position 54 (S54) is a Phosphoserine. A Protein kinase 1 domain is found at 62–321 (FELLKVLGQG…AEEIKRHIFY (260 aa)). ATP-binding positions include 68 to 76 (LGQGSFGKV) and K94. Catalysis depends on D187, which acts as the Proton acceptor. S221 is subject to Phosphoserine; by PDPK1. At S307 the chain carries Phosphoserine. The AGC-kinase C-terminal domain occupies 322–391 (STIDWNKLYR…VATGLMEDDS (70 aa)). T359 is subject to Phosphothreonine. S363 is modified (phosphoserine). S369 and S380 each carry phosphoserine; by autocatalysis. The Protein kinase 2 domain occupies 418 to 675 (YIVKETIGVG…AKQVLQHPWI (258 aa)). ATP-binding positions include 424-432 (IGVGSYSVC) and K447. D535 acts as the Proton acceptor in catalysis. Residue T573 is modified to Phosphothreonine. S732 is subject to Phosphoserine.

This sequence belongs to the protein kinase superfamily. AGC Ser/Thr protein kinase family. S6 kinase subfamily. As to quaternary structure, forms a complex with either MAPK1/ERK2 or MAPK3/ERK1 in quiescent cells. Transiently dissociates following mitogenic stimulation. Interacts with ETV1/ER81 and FGFR1. Mg(2+) is required as a cofactor. Post-translationally, activated by phosphorylation at Ser-221 by PDPK1. Autophosphorylated on Ser-380, as part of the activation process. May be phosphorylated at Thr-359 and Ser-363 by MAPK1/ERK2 and MAPK3/ERK1. In terms of processing, N-terminal myristoylation results in an activated kinase in the absence of added growth factors.

It is found in the nucleus. The protein localises to the cytoplasm. The enzyme catalyses L-seryl-[protein] + ATP = O-phospho-L-seryl-[protein] + ADP + H(+). It catalyses the reaction L-threonyl-[protein] + ATP = O-phospho-L-threonyl-[protein] + ADP + H(+). With respect to regulation, upon extracellular signal or mitogen stimulation, phosphorylated at Thr-573 in the C-terminal kinase domain (CTKD) by MAPK1/ERK2 and MAPK3/ERK1. The activated CTKD then autophosphorylates Ser-380, allowing binding of PDPK1, which in turn phosphorylates Ser-221 in the N-terminal kinase domain (NTDK) leading to the full activation of the protein and subsequent phosphorylation of the substrates by the NTKD. Serine/threonine-protein kinase that acts downstream of ERK (MAPK1/ERK2 and MAPK3/ERK1) signaling and mediates mitogenic and stress-induced activation of the transcription factors CREB1, ETV1/ER81 and NR4A1/NUR77, regulates translation through RPS6 and EIF4B phosphorylation, and mediates cellular proliferation, survival, and differentiation by modulating mTOR signaling and repressing pro-apoptotic function of BAD and DAPK1. In fibroblast, is required for EGF-stimulated phosphorylation of CREB1, which results in the subsequent transcriptional activation of several immediate-early genes. In response to mitogenic stimulation (EGF and PMA), phosphorylates and activates NR4A1/NUR77 and ETV1/ER81 transcription factors and the cofactor CREBBP. Upon insulin-derived signal, acts indirectly on the transcription regulation of several genes by phosphorylating GSK3B at 'Ser-9' and inhibiting its activity. Phosphorylates RPS6 in response to serum or EGF via an mTOR-independent mechanism and promotes translation initiation by facilitating assembly of the pre-initiation complex. In response to insulin, phosphorylates EIF4B, enhancing EIF4B affinity for the EIF3 complex and stimulating cap-dependent translation. Is involved in the mTOR nutrient-sensing pathway by directly phosphorylating TSC2 at 'Ser-1798', which potently inhibits TSC2 ability to suppress mTOR signaling, and mediates phosphorylation of RPTOR, which regulates mTORC1 activity and may promote rapamycin-sensitive signaling independently of the PI3K/AKT pathway. Also involved in feedback regulation of mTORC1 and mTORC2 by phosphorylating DEPTOR. Mediates cell survival by phosphorylating the pro-apoptotic proteins BAD and DAPK1 and suppressing their pro-apoptotic function. Promotes the survival of hepatic stellate cells by phosphorylating CEBPB in response to the hepatotoxin carbon tetrachloride (CCl4). Mediates induction of hepatocyte prolifration by TGFA through phosphorylation of CEBPB. Is involved in cell cycle regulation by phosphorylating the CDK inhibitor CDKN1B, which promotes CDKN1B association with 14-3-3 proteins and prevents its translocation to the nucleus and inhibition of G1 progression. Phosphorylates EPHA2 at 'Ser-897', the RPS6KA-EPHA2 signaling pathway controls cell migration. In response to mTORC1 activation, phosphorylates EIF4B at 'Ser-406' and 'Ser-422' which stimulates bicarbonate cotransporter SLC4A7 mRNA translation, increasing SLC4A7 protein abundance and function. This chain is Ribosomal protein S6 kinase alpha-1 (Rps6ka1), found in Rattus norvegicus (Rat).